Reading from the N-terminus, the 309-residue chain is Probable manganese-dependent inorganic pyrophosphatase (309 aa).

Residues His9, Asp13, Asp15, Asp75, His97, and Asp149 each coordinate Mn(2+).

Belongs to the PPase class C family. It depends on Mn(2+) as a cofactor.

The protein localises to the cytoplasm. It catalyses the reaction diphosphate + H2O = 2 phosphate + H(+). This Staphylococcus saprophyticus subsp. saprophyticus (strain ATCC 15305 / DSM 20229 / NCIMB 8711 / NCTC 7292 / S-41) protein is Probable manganese-dependent inorganic pyrophosphatase.